The following is a 458-amino-acid chain: Ammonium transporter Rh type B (458 aa).

Residues 1–13 (MAGSPSRAAGRRL) are Cytoplasmic-facing. The helical transmembrane segment at 14–34 (QLPLLCLFLQGATAVLFAVFV) threads the bilayer. Residues 35–61 (RYNHKTDAALWHRSNHSNADNEFYFRY) are Extracellular-facing. Asn49 carries an N-linked (GlcNAc...) asparagine glycan. Residues 62–82 (PSFQDVHAMVFVGFGFLMVFL) form a helical membrane-spanning segment. Over 83 to 86 (QRYG) the chain is Cytoplasmic. The helical transmembrane segment at 87-107 (FSSVGFTFLLAAFALQWSTLV) threads the bilayer. At 108-124 (QGFLHSFHGGHIHVGVE) the chain is on the extracellular side. The chain crosses the membrane as a helical span at residues 125–145 (SMINADFCAGAVLISFGAVLG). Residues 146–149 (KTGP) are Cytoplasmic-facing. The helical transmembrane segment at 150 to 170 (TQLLLMALLEVVLFGINEFVL) threads the bilayer. Over 171-178 (LHLLGVRD) the chain is Extracellular. Residues 179 to 201 (AGGSMTIHTFGAYFGLVLSRVLY) traverse the membrane as a helical segment. The Cytoplasmic portion of the chain corresponds to 202–219 (RPQLEKSKHRQGSVYHSD). The chain crosses the membrane as a helical span at residues 220 to 240 (LFAMIGTIFLWIFWPSFNAAL). At 241 to 251 (TALGAGQHRTA) the chain is on the extracellular side. The helical transmembrane segment at 252-272 (LNTYYSLAASTLGTFALSALV) threads the bilayer. At 273–282 (GEDGRLDMVH) the chain is on the cytoplasmic side. A helical transmembrane segment spans residues 283–303 (IQNAALAGGVVVGTSSEMMLT). Pro304 is a topological domain (extracellular). Residues 305-325 (FGALAAGFLAGTVSTLGYKFF) traverse the membrane as a helical segment. The Cytoplasmic segment spans residues 326 to 346 (TPILESKFKVQDTCGVHNLHG). A helical transmembrane segment spans residues 347 to 367 (MPGVLGALLGVLVAGLATHEA). The Extracellular portion of the chain corresponds to 368-393 (YGDGLESVFPLIAEGQRSATSQAMHQ). A helical transmembrane segment spans residues 394-414 (LFGLFVTLMFASVGGGLGGLL). The Cytoplasmic segment spans residues 415 to 458 (LKLPFLDSPPDSQHYEDQVHWQVPGEHEDKAQRPLRVEEADTQA). The interaction with ANK3 stretch occupies residues 416–424 (KLPFLDSPP). The tract at residues 436–458 (QVPGEHEDKAQRPLRVEEADTQA) is disordered.

The protein belongs to the ammonium transporter (TC 2.A.49) family. Rh subfamily. Interacts (via C-terminus) with ANK2 and ANK3; required for targeting to the basolateral membrane. Post-translationally, N-glycosylated. In terms of tissue distribution, specifically expressed in kidney. Also detected in liver and ovary.

It localises to the cell membrane. The protein resides in the basolateral cell membrane. The enzyme catalyses NH4(+)(in) = NH4(+)(out). It carries out the reaction methylamine(out) = methylamine(in). It catalyses the reaction CO2(out) = CO2(in). In terms of biological role, ammonium transporter involved in the maintenance of acid-base homeostasis. Transports ammonium and its related derivative methylammonium across the basolateral plasma membrane of epithelial cells likely contributing to renal transepithelial ammonia transport and ammonia metabolism. May transport either NH4(+) or NH3 ammonia species predominantly mediating an electrogenic NH4(+) transport. May act as a CO2 channel providing for renal acid secretion. In Homo sapiens (Human), this protein is Ammonium transporter Rh type B.